A 193-amino-acid polypeptide reads, in one-letter code: Alpha-S2-casein (193 aa).

Residues 1–15 form the signal peptide; sequence MKFFIFTCLLAVVLA. Phosphoserine occurs at positions 23, 24, 25, 28, 47, 68, 123, 125, 128, and 136.

The protein belongs to the alpha-casein family. As to expression, mammary gland specific. Secreted in milk.

It is found in the secreted. Important role in the capacity of milk to transport calcium phosphate. This Camelus dromedarius (Dromedary) protein is Alpha-S2-casein (CSN1S2).